The chain runs to 419 residues: Adenylosuccinate synthetase (419 aa).

GTP is bound by residues 11 to 17 and 39 to 41; these read GDEGKGK and GHS. D12 acts as the Proton acceptor in catalysis. 2 residues coordinate Mg(2+): D12 and G39. IMP is bound by residues 12-15, 37-40, T129, R143, N221, T236, and R296; these read DEGK and NAGH. The Proton donor role is filled by H40. 292 to 298 is a binding site for substrate; it reads VSTGRKR. Residues R298, 324 to 326, and 408 to 410 each bind GTP; these read KLD and GTG.

This sequence belongs to the adenylosuccinate synthetase family. Homodimer. It depends on Mg(2+) as a cofactor.

It is found in the cytoplasm. The catalysed reaction is IMP + L-aspartate + GTP = N(6)-(1,2-dicarboxyethyl)-AMP + GDP + phosphate + 2 H(+). Its pathway is purine metabolism; AMP biosynthesis via de novo pathway; AMP from IMP: step 1/2. Plays an important role in the de novo pathway and in the salvage pathway of purine nucleotide biosynthesis. Catalyzes the first committed step in the biosynthesis of AMP from IMP. The polypeptide is Adenylosuccinate synthetase (Chaetomium globosum (strain ATCC 6205 / CBS 148.51 / DSM 1962 / NBRC 6347 / NRRL 1970) (Soil fungus)).